The following is a 661-amino-acid chain: UvrABC system protein B (661 aa).

Positions 25 to 182 constitute a Helicase ATP-binding domain; sequence AGLNSKKRSQ…SDLVNLQYER (158 aa). Residue 38 to 45 coordinates ATP; that stretch reads GITGSGKT. A Beta-hairpin motif is present at residues 91–114; that stretch reads YYDYYQPEAYIARTDTFIEKDSSI. The region spanning 430–592 is the Helicase C-terminal domain; the sequence is QVEDLISEIQ…IIPQTINRTI (163 aa). Positions 621-656 constitute a UVR domain; that stretch reads KAHIYKLKKAMLKAASNLEFEQATKLRDQLKNLEEA.

This sequence belongs to the UvrB family. Forms a heterotetramer with UvrA during the search for lesions. Interacts with UvrC in an incision complex.

The protein resides in the cytoplasm. The UvrABC repair system catalyzes the recognition and processing of DNA lesions. A damage recognition complex composed of 2 UvrA and 2 UvrB subunits scans DNA for abnormalities. Upon binding of the UvrA(2)B(2) complex to a putative damaged site, the DNA wraps around one UvrB monomer. DNA wrap is dependent on ATP binding by UvrB and probably causes local melting of the DNA helix, facilitating insertion of UvrB beta-hairpin between the DNA strands. Then UvrB probes one DNA strand for the presence of a lesion. If a lesion is found the UvrA subunits dissociate and the UvrB-DNA preincision complex is formed. This complex is subsequently bound by UvrC and the second UvrB is released. If no lesion is found, the DNA wraps around the other UvrB subunit that will check the other stand for damage. This is UvrABC system protein B from Rickettsia canadensis (strain McKiel).